Here is a 107-residue protein sequence, read N- to C-terminus: MAFEVSAEDQDRQLTLIDEDGNEELFEVLFTFHSDDNDKSYILLYPAAVEDDDEIEVQAFSYDADEDGDVTSSDLHEITSDAEWDMVQGVLNTFLEDDRLSGDDSAE.

It belongs to the UPF0473 family.

The chain is UPF0473 protein Ldb1604 from Lactobacillus delbrueckii subsp. bulgaricus (strain ATCC 11842 / DSM 20081 / BCRC 10696 / JCM 1002 / NBRC 13953 / NCIMB 11778 / NCTC 12712 / WDCM 00102 / Lb 14).